Consider the following 270-residue polypeptide: Formamidopyrimidine-DNA glycosylase (270 aa).

Residue proline 2 is the Schiff-base intermediate with DNA of the active site. Glutamate 3 (proton donor) is an active-site residue. Lysine 57 serves as the catalytic Proton donor; for beta-elimination activity. DNA-binding residues include histidine 90, arginine 109, and lysine 150. An FPG-type zinc finger spans residues 235–269; sequence LVYGNKDKPCPRCGTKIKSIIIGQRNSFFCPQCQK. The Proton donor; for delta-elimination activity role is filled by arginine 259.

Belongs to the FPG family. As to quaternary structure, monomer. The cofactor is Zn(2+).

The enzyme catalyses Hydrolysis of DNA containing ring-opened 7-methylguanine residues, releasing 2,6-diamino-4-hydroxy-5-(N-methyl)formamidopyrimidine.. It catalyses the reaction 2'-deoxyribonucleotide-(2'-deoxyribose 5'-phosphate)-2'-deoxyribonucleotide-DNA = a 3'-end 2'-deoxyribonucleotide-(2,3-dehydro-2,3-deoxyribose 5'-phosphate)-DNA + a 5'-end 5'-phospho-2'-deoxyribonucleoside-DNA + H(+). Involved in base excision repair of DNA damaged by oxidation or by mutagenic agents. Acts as a DNA glycosylase that recognizes and removes damaged bases. Has a preference for oxidized purines, such as 7,8-dihydro-8-oxoguanine (8-oxoG). Has AP (apurinic/apyrimidinic) lyase activity and introduces nicks in the DNA strand. Cleaves the DNA backbone by beta-delta elimination to generate a single-strand break at the site of the removed base with both 3'- and 5'-phosphates. This is Formamidopyrimidine-DNA glycosylase from Histophilus somni (strain 2336) (Haemophilus somnus).